Consider the following 957-residue polypeptide: MQPMVMQGCPYTLPRCHDWQAADQFHHSSSLRSTCPHPQVRAAVTSPAPPQDGAGVPCLSLKLLNGSVGASGPLEPPAMNLCWNEIKKKSHNLRARLEAFSDHSGKLQLPLQEIIDWLSQKDEELSAQLPLQGDVALVQQEKETHAAFMEEVKSRGPYIYSVLESAQAFLSQHPFEELEEPHSESKDTSPKQRIQNLSRFVWKQATVASELWEKLTARCVDQHRHIERTLEQLLEIQGAMEELSTTLSQAEGVRATWEPIGDLFIDSLPEHIQAIKLFKEEFSPMKDGVKLVNDLAHQLAISDVHLSMENSQALEQINVRWKQLQASVSERLKQLQDAHRDFGPGSQHFLSSSVQVPWERAISPNKVPYYINHQAQTTCWDHPKMTELYQTLADLNNIKFSAYRTAMKLRRVQKALRLDLVTLTTALEIFNEHDLQASEHVMDVVEVIHCLTALYERLEEERGILVNVPLCVDMSLNWLLNVFDSGRSGKMRALSFKTGIACLCGTEVKEKLQYLFSQVANSGSQCDQRHLGVLLHEAIQVPRQLGEVAAFGGSNVEPSVRSCFRFSTGKPVIEASQFLEWVNLEPQSMVWLAVLHRVTIAEQVKHQTKCSICRQCPIKGFRYRSLKQFNVDICQTCFLTGRASKGNKLHYPIMEYYTPTTSSENMRDFATTLKNKFRSKHYFSKHPQRGYLPVQSVLEADYSETPASSPMWPHADTHSRIEHFASRLAEMESQNCSFFNDSLSPDDSIDEDQYLLRHSSPITDREPAFGQQAPCSVATESKGELQKILAHLEDENRILQGELRRLKWQHEEAAEAPSLADGSTEAATDHRNEELLAEARILRQHKSRLETRMQILEDHNKQLESQLQRLRELLLQPPTESDGSGSAGSSLASSPQQSEGSHPREKGQTTPDTEAADDVGSKSQDVSLCLEDIMEKLRHAFPSVRSSDVTANTLLAS.

Spectrin repeat units follow at residues 102–179 (DHSG…EELE) and 231–337 (EQLL…QLQD). Residues 358 to 383 (WERAISPNKVPYYINHQAQTTCWDHP) form the WW domain. A ZZ-type; degenerate zinc finger spans residues 605-661 (KHQTKCSICRQCPIKGFRYRSLKQFNVDICQTCFLTGRASKGNKLHYPIMEYYTPTT). C610, C613, C634, and C637 together coordinate Zn(2+). S748 is modified (phosphoserine). Over residues 877-900 (PPTESDGSGSAGSSLASSPQQSEG) the composition is skewed to low complexity. Residues 877-923 (PPTESDGSGSAGSSLASSPQQSEGSHPREKGQTTPDTEAADDVGSKS) are disordered. The residue at position 910 (T910) is a Phosphothreonine.

Interacts with PRX; this enhances phosphorylation. Identified in a dystroglycan complex that contains at least PRX, DRP2, UTRN, DMD and DAG1. Detected in fetal brain.

It is found in the postsynaptic density. The protein resides in the cell projection. The protein localises to the dendrite. It localises to the perikaryon. Its subcellular location is the cell membrane. In terms of biological role, required for normal myelination and for normal organization of the cytoplasm and the formation of Cajal bands in myelinating Schwann cells. Required for normal PRX location at appositions between the abaxonal surface of the myelin sheath and the Schwann cell plasma membrane. Possibly involved in membrane-cytoskeleton interactions of the central nervous system. This chain is Dystrophin-related protein 2 (DRP2), found in Homo sapiens (Human).